The chain runs to 370 residues: Glutamine synthetase (370 aa).

Ala-2 bears the N-acetylalanine mark. Ser-5 bears the Phosphoserine mark. One can recognise a GS beta-grasp domain in the interval 24–103 (IIAEYVWIDG…VLAACYNNDG (80 aa)). The 261-residue stretch at 110 to 370 (HRHEAAKLFA…MTKEFERESS (261 aa)) folds into the GS catalytic domain. Glycyl lysine isopeptide (Lys-Gly) (interchain with G-Cter in ubiquitin) cross-links involve residues Lys-283, Lys-324, and Lys-363.

Belongs to the glutamine synthetase family. As to quaternary structure, homooctamer.

It is found in the cytoplasm. The enzyme catalyses L-glutamate + NH4(+) + ATP = L-glutamine + ADP + phosphate + H(+). The polypeptide is Glutamine synthetase (GLN1) (Saccharomyces cerevisiae (strain ATCC 204508 / S288c) (Baker's yeast)).